Consider the following 488-residue polypeptide: Probable malate:quinone oxidoreductase (488 aa).

The protein belongs to the MQO family. Requires FAD as cofactor.

The enzyme catalyses (S)-malate + a quinone = a quinol + oxaloacetate. Its pathway is carbohydrate metabolism; tricarboxylic acid cycle; oxaloacetate from (S)-malate (quinone route): step 1/1. This Neisseria gonorrhoeae (strain ATCC 700825 / FA 1090) protein is Probable malate:quinone oxidoreductase.